The primary structure comprises 541 residues: Membrane protein insertase YidC (541 aa).

5 helical membrane-spanning segments follow: residues 7–27, 345–365, 415–435, 453–473, and 492–512; these read LLFM…QVDY, LVQN…AILY, LGGC…YWTF, LSAQ…MFLL, and FMPL…VLYW.

It belongs to the OXA1/ALB3/YidC family. Type 1 subfamily. As to quaternary structure, interacts with the Sec translocase complex via SecD. Specifically interacts with transmembrane segments of nascent integral membrane proteins during membrane integration.

It localises to the cell inner membrane. Required for the insertion and/or proper folding and/or complex formation of integral membrane proteins into the membrane. Involved in integration of membrane proteins that insert both dependently and independently of the Sec translocase complex, as well as at least some lipoproteins. Aids folding of multispanning membrane proteins. This Histophilus somni (strain 129Pt) (Haemophilus somnus) protein is Membrane protein insertase YidC.